The following is a 274-amino-acid chain: Large ribosomal subunit protein uL2 (274 aa).

2 disordered regions span residues M1 to E23 and G222 to G242.

It belongs to the universal ribosomal protein uL2 family. As to quaternary structure, part of the 50S ribosomal subunit. Forms a bridge to the 30S subunit in the 70S ribosome.

Its function is as follows. One of the primary rRNA binding proteins. Required for association of the 30S and 50S subunits to form the 70S ribosome, for tRNA binding and peptide bond formation. It has been suggested to have peptidyltransferase activity; this is somewhat controversial. Makes several contacts with the 16S rRNA in the 70S ribosome. The polypeptide is Large ribosomal subunit protein uL2 (Dehalococcoides mccartyi (strain ATCC BAA-2266 / KCTC 15142 / 195) (Dehalococcoides ethenogenes (strain 195))).